We begin with the raw amino-acid sequence, 719 residues long: Forkhead box protein K1 (719 aa).

At Ala-2 the chain carries N-acetylalanine. The segment at 2–40 is interaction with SIN3A and SIN3B; sequence AEVGEDSGARALLALRSAPCSPVLCAAAAAAAFPATTSP. Residues 35 to 67 form a disordered region; the sequence is PATTSPPPPAQPPPGPPALPAEPGPGPVPSTVA. Over residues 38-62 the composition is skewed to pro residues; that stretch reads TSPPPPAQPPPGPPALPAEPGPGPV. The required for interaction with FOXO4 and MEF2C stretch occupies residues 81–406; it reads AASVRQSPGP…PLSSRSAPAS (326 aa). At Ser-87 the chain carries Phosphoserine. Residues 109–161 enclose the FHA domain; it reads VTIGRNSSQGSVDLSMGLSSFISRRHLQLSFQEPHFYLRCLGKNGVFVDGAFQ. Omega-N-methylarginine is present on residues Arg-147 and Arg-177. Phosphoserine occurs at positions 199, 209, 225, and 229. 2 positions are modified to phosphothreonine: Thr-231 and Thr-233. A phosphoserine mark is found at Ser-239, Ser-243, Ser-281, and Ser-285. Residues 291-386 constitute a DNA-binding region (fork-head); the sequence is KPPYSYAQLI…EQAFRKRRQR (96 aa). The disordered stretch occupies residues 399 to 443; the sequence is SSRSAPASPTHPGLMSPRSSGLQTPECLSREGSPIPHDPDLGSKL. Residues Ser-402 and Ser-406 each carry the phosphoserine modification. At Thr-408 the chain carries Phosphothreonine. At Ser-414 the chain carries Phosphoserine. Thr-422 carries the phosphothreonine modification. A phosphoserine mark is found at Ser-427, Ser-431, and Ser-445. Over residues 665-685 the composition is skewed to low complexity; sequence AANAAPTPAASTTTSASSSGE. Positions 665 to 719 are disordered; the sequence is AANAAPTPAASTTTSASSSGEPEVKRSRVEEPGGTATTQPTAMAATGPQGPGTGE. The span at 686–695 shows a compositional bias: basic and acidic residues; sequence PEVKRSRVEE. Residues 696–712 show a composition bias toward low complexity; that stretch reads PGGTATTQPTAMAATGP.

In terms of assembly, interacts with SIN3A and SIN3B (via PAH2) to form a complex which represses transcription. Component of SIN3A-, but not SIN3B-, containing multiprotein complexes. Interacts with FOXO4 and MEF2C; both interactions inhibit FOXO4 and MEF2C transactivation activity. Interacts (when phosphorylated) with YWHAE/14-3-3-epsilon; promotes sequestration in the cytoplasm and leads to impaired ability to bind DNA. Interacts with FHL2. Interacts with SRF. Interacts with DVL2 and DVL3; the interaction induces DVL2 nuclear translocation. Interacts with BAP1 (when phosphorylated). Accessory component of the polycomb repressive deubiquitinase (PR-DUB) complex, at least composed of BAP1, one of ASXL1, ASXL2 or (probably) ASXL3 and one of MBD5 or MBD6. The PR-DUB core associates with a number of accessory proteins, including FOXK1, FOXK2, KDM1B, HCFC1 and OGT. Post-translationally, phosphorylation by GSK3 (GSK3A or GSK3B) promotes interaction with YWHAE/14-3-3-epsilon and retention in the cytoplasm. In response to mTORC1 signaling, phosphorylation by GSK3 is prevented, leading to translocation to the nucleus. In terms of tissue distribution, expressed in tissues and cells in which the myoglobin gene is transcriptionally active including cardiac and skeletal myocytes, brain and kidney. In the adult brain, expressed in the piriform cortex and the indusium griseum. In the hippocampus, expression is localized to the dentate gyrus and CA3 area. In the cerebellum, expression is confined to the Purkinje cell layer. Present in neuroretinal cells: expressed in rod bipolar cells, amacrine cells and ganglion cells (at protein level).

The protein localises to the nucleus. The protein resides in the cytoplasm. Its function is as follows. Transcriptional regulator involved in different processes such as glucose metabolism, aerobic glycolysis, muscle cell differentiation and autophagy. Recognizes and binds the forkhead DNA sequence motif (5'-GTAAACA-3') and can both act as a transcription activator or repressor, depending on the context. Together with FOXK2, acts as a key regulator of metabolic reprogramming towards aerobic glycolysis, a process in which glucose is converted to lactate in the presence of oxygen. Acts by promoting expression of enzymes for glycolysis (such as hexokinase-2 (HK2), phosphofructokinase, pyruvate kinase (PKLR) and lactate dehydrogenase), while suppressing further oxidation of pyruvate in the mitochondria by up-regulating pyruvate dehydrogenase kinases PDK1 and PDK4. Probably plays a role in gluconeogenesis during overnight fasting, when lactate from white adipose tissue and muscle is the main substrate. Involved in mTORC1-mediated metabolic reprogramming: in response to mTORC1 signaling, translocates into the nucleus and regulates the expression of genes associated with glycolysis and downstream anabolic pathways, such as HIF1A, thereby regulating glucose metabolism. Together with FOXK2, acts as a negative regulator of autophagy in skeletal muscle: in response to starvation, enters the nucleus, binds the promoters of autophagy genes and represses their expression, preventing proteolysis of skeletal muscle proteins. Acts as a transcriptional regulator of the myogenic progenitor cell population in skeletal muscle. Binds to the upstream enhancer region (CCAC box) of myoglobin (MB) gene, regulating the myogenic progenitor cell population. Promotes muscle progenitor cell proliferation by repressing the transcriptional activity of FOXO4, thereby inhibiting myogenic differentiation. Involved in remodeling processes of adult muscles that occur in response to physiological stimuli. Required to correct temporal orchestration of molecular and cellular events necessary for muscle repair. Represses myogenic differentiation by inhibiting MEFC activity. Positively regulates Wnt/beta-catenin signaling by translocating DVL into the nucleus. Reduces virus replication, probably by binding the interferon stimulated response element (ISRE) to promote antiviral gene expression. Accessory component of the polycomb repressive deubiquitinase (PR-DUB) complex; recruits the PR-DUB complex to specific FOXK1-bound genes. The sequence is that of Forkhead box protein K1 from Mus musculus (Mouse).